A 520-amino-acid chain; its full sequence is GMP synthase [glutamine-hydrolyzing] (520 aa).

The 194-residue stretch at 12-205 (KIIVLDYGSQ…AISICGARGD (194 aa)) folds into the Glutamine amidotransferase type-1 domain. Cys89 (nucleophile) is an active-site residue. Residues His179 and Glu181 contribute to the active site. The region spanning 206 to 395 (WSMDNFIDME…LGMPEEIVWR (190 aa)) is the GMPS ATP-PPase domain. An ATP-binding site is contributed by 233–239 (SGGVDSS).

In terms of assembly, homodimer.

The catalysed reaction is XMP + L-glutamine + ATP + H2O = GMP + L-glutamate + AMP + diphosphate + 2 H(+). It functions in the pathway purine metabolism; GMP biosynthesis; GMP from XMP (L-Gln route): step 1/1. In terms of biological role, catalyzes the synthesis of GMP from XMP. In Streptococcus pyogenes serotype M2 (strain MGAS10270), this protein is GMP synthase [glutamine-hydrolyzing].